The chain runs to 432 residues: D-amino acid dehydrogenase 1 (432 aa).

Val3–Tyr17 contributes to the FAD binding site. Residues Gly410 to His432 are disordered.

The protein belongs to the DadA oxidoreductase family. Requires FAD as cofactor.

The catalysed reaction is a D-alpha-amino acid + A + H2O = a 2-oxocarboxylate + AH2 + NH4(+). The protein operates within amino-acid degradation; D-alanine degradation; NH(3) and pyruvate from D-alanine: step 1/1. Its function is as follows. Catalyzes the oxidative deamination of D-amino acids. Has very broad substrate specificity; all the D-amino acids tested can be used as the substrate except D-Glu and D-Gln. Participates in the utilization of several D-amino acids as the sole source of nitrogen, i.e. D-alanine, D-histidine, D-phenylalanine, D-serine, D-threonine, and D-valine. The sequence is that of D-amino acid dehydrogenase 1 (dadA1) from Pseudomonas aeruginosa (strain ATCC 15692 / DSM 22644 / CIP 104116 / JCM 14847 / LMG 12228 / 1C / PRS 101 / PAO1).